The following is a 1237-amino-acid chain: Putative structural protein VP3 (1237 aa).

Residues 963–1178 enclose the PPPDE domain; it reads GFLDKRVGDA…WDVSTAARMQ (216 aa). Residues His-1001 and Cys-1149 contribute to the active site.

It is found in the virion. This is Putative structural protein VP3 (S3) from Lymantria dispar cypovirus 1 (isolate Rao) (LdCPV-1).